The following is a 222-amino-acid chain: Collectrin (222 aa).

A signal peptide spans 1–14 (MLWLLFFLVTAIHA). Over 15-141 (DLCRPDAENA…LAPPTDPSVP (127 aa)) the chain is Extracellular. Residues 21–222 (AENAFKVRLS…VTEDERLTPL (202 aa)) form the Collectrin-like domain. N-linked (GlcNAc...) asparagine glycans are attached at residues asparagine 76 and asparagine 93. A helical transmembrane segment spans residues 142 to 162 (IWIIIFGVIFCIVLVATMLLI). At 163–222 (ISGIRQHRRKNKGPSEMEDSEDKCENVITIENGIPCDPLDMKGGHINDAFVTEDERLTPL) the chain is on the cytoplasmic side. Phosphothreonine is present on residues threonine 214 and threonine 220.

This sequence belongs to the CLTRN family. In terms of assembly, monomer. Homodimer; dimerization prevents CLTRN cleavage by BACE2. Interacts with SLC6A18; this interaction regulates the trafficking of SLC6A18 to the cell membrane and its amino acid transporter activity. Interacts with SLC6A19; this interaction regulates the trafficking of SLC6A19 to the cell membrane and its amino acid transporter activity. Interacts with SNAPIN. In terms of processing, glycosylated. Glycosylation is required for plasma membrane localization and for its cleavage by BACE2. Proteolytically processed in pancreatic beta cells by BACE2 leading to the generation and extracellular release of soluble CLTRN, and a corresponding cell-associated C-terminal fragment which is later cleaved by gamma-secretase. This shedding process inactivates CLTRN. Three cleavage sites have been identified for BACE2, two clustered sites after Phe-116 and Leu-118 and a more membrane proximal site at Phe-125; the preferred BACE2 cleavage site seems to be between Phe-125 and Leu-126, Phe-116 and Leu-118 act as alternative sites.

The protein localises to the cell membrane. Its function is as follows. Plays an important role in amino acid transport by acting as binding partner of amino acid transporters SLC6A18 and SLC6A19, regulating their trafficking on the cell surface and their activity. May also play a role in trafficking of amino acid transporters SLC3A1 and SLC7A9 to the renal cortical cell membrane. Regulator of SNARE complex function. Stimulator of beta cell replication. This is Collectrin (CLTRN) from Bos taurus (Bovine).